We begin with the raw amino-acid sequence, 293 residues long: Nucleotide-binding protein cauri_1197 (293 aa).

16–23 (GMSGGGLT) contributes to the ATP binding site. 67 to 70 (DVRS) is a binding site for GTP.

It belongs to the RapZ-like family.

In terms of biological role, displays ATPase and GTPase activities. The sequence is that of Nucleotide-binding protein cauri_1197 from Corynebacterium aurimucosum (strain ATCC 700975 / DSM 44827 / CIP 107346 / CN-1) (Corynebacterium nigricans).